The primary structure comprises 471 residues: Glutamate--tRNA ligase (471 aa).

Positions 9 to 19 (PSPTGYLHVGG) match the 'HIGH' region motif. The Zn(2+) site is built by cysteine 98, cysteine 100, cysteine 125, and histidine 127. The 'KMSKS' region signature appears at 237 to 241 (KLSKR). Residue lysine 240 participates in ATP binding.

It belongs to the class-I aminoacyl-tRNA synthetase family. Glutamate--tRNA ligase type 1 subfamily. Monomer. Requires Zn(2+) as cofactor.

It is found in the cytoplasm. It carries out the reaction tRNA(Glu) + L-glutamate + ATP = L-glutamyl-tRNA(Glu) + AMP + diphosphate. Functionally, catalyzes the attachment of glutamate to tRNA(Glu) in a two-step reaction: glutamate is first activated by ATP to form Glu-AMP and then transferred to the acceptor end of tRNA(Glu). This Escherichia coli (strain SMS-3-5 / SECEC) protein is Glutamate--tRNA ligase.